The following is a 511-amino-acid chain: Bifunctional purine biosynthesis protein PurH (511 aa).

An MGS-like domain is found at 1-145; it reads MKKRALVSVS…KNHQFVSVIV (145 aa).

This sequence belongs to the PurH family.

It carries out the reaction (6R)-10-formyltetrahydrofolate + 5-amino-1-(5-phospho-beta-D-ribosyl)imidazole-4-carboxamide = 5-formamido-1-(5-phospho-D-ribosyl)imidazole-4-carboxamide + (6S)-5,6,7,8-tetrahydrofolate. The enzyme catalyses IMP + H2O = 5-formamido-1-(5-phospho-D-ribosyl)imidazole-4-carboxamide. It participates in purine metabolism; IMP biosynthesis via de novo pathway; 5-formamido-1-(5-phospho-D-ribosyl)imidazole-4-carboxamide from 5-amino-1-(5-phospho-D-ribosyl)imidazole-4-carboxamide (10-formyl THF route): step 1/1. It functions in the pathway purine metabolism; IMP biosynthesis via de novo pathway; IMP from 5-formamido-1-(5-phospho-D-ribosyl)imidazole-4-carboxamide: step 1/1. This Bacillus cereus (strain G9842) protein is Bifunctional purine biosynthesis protein PurH.